The following is a 616-amino-acid chain: Hemagglutinin-neuraminidase (616 aa).

The Intravirion segment spans residues 1 to 26 (MDRAVSQVALENDEREAKNTWRLVFR). Residues 27–47 (IAILLLTVVTLAISAAALAYS) form a helical membrane-spanning segment. Residues 48 to 616 (MEASTPSDLV…ELESYAASWP (569 aa)) lie on the Virion surface side of the membrane. Residue Asn119 is glycosylated (N-linked (GlcNAc...) asparagine; by host). Residues 124-152 (GAPIHDPDYIGGIGKELIVDDASDVTSFY) are important for interaction with fusion/F protein. 3 disulfide bridges follow: Cys172–Cys196, Cys186–Cys247, and Cys238–Cys251. An involved in neuraminidase activity region spans residues 234-239 (NRKSCS). N-linked (GlcNAc...) asparagine; by host glycosylation is found at Asn341 and Asn433. 2 disulfides stabilise this stretch: Cys344–Cys461 and Cys455–Cys465. Residues Asn481, Asn538, and Asn600 are each glycosylated (N-linked (GlcNAc...) asparagine; by host). A disulfide bridge connects residues Cys531 and Cys542.

It belongs to the paramyxoviruses hemagglutinin-neuraminidase family. In terms of assembly, homotetramer; composed of disulfide-linked homodimers. Interacts with F protein trimer. Interacts with host CG-1B; this interaction inhibits viral adsorption and replication rather than internalization.

It is found in the virion membrane. The protein localises to the host cell membrane. It catalyses the reaction Hydrolysis of alpha-(2-&gt;3)-, alpha-(2-&gt;6)-, alpha-(2-&gt;8)- glycosidic linkages of terminal sialic acid residues in oligosaccharides, glycoproteins, glycolipids, colominic acid and synthetic substrates.. In terms of biological role, mediates the viral entry into the host cell together with fusion/F protein. Attaches the virus to sialic acid-containing cell receptors and thereby initiates infection. Binding of HN protein to the receptor induces a conformational change that allows the F protein to trigger virion/cell membranes fusion. Functionally, neuraminidase activity ensures the efficient spread of the virus by dissociating the mature virions from the neuraminic acid containing glycoproteins. The chain is Hemagglutinin-neuraminidase (HN) from Gallus gallus (Chicken).